The sequence spans 122 residues: MINKTAKNTKRLRRAERVRYKLRQTSERPRLVFNKTNRYLTAQIIDDAKGVTLVYATTLEKDFPKHENSKKSKSAATELGKVVADKAKKAGVSQVVLDRSGMVYHGRIAAFADSAREGGLEF.

Belongs to the universal ribosomal protein uL18 family. Part of the 50S ribosomal subunit; part of the 5S rRNA/L5/L18/L25 subcomplex. Contacts the 5S and 23S rRNAs.

In terms of biological role, this is one of the proteins that bind and probably mediate the attachment of the 5S RNA into the large ribosomal subunit, where it forms part of the central protuberance. The chain is Large ribosomal subunit protein uL18 from Leptospira biflexa serovar Patoc (strain Patoc 1 / Ames).